A 450-amino-acid polypeptide reads, in one-letter code: Serine/threonine-protein kinase SSN3 (450 aa).

Residues 40–393 enclose the Protein kinase domain; that stretch reads YRIIGFISSG…AAQALQSPFF (354 aa). ATP contacts are provided by residues 46–54 and lysine 71; that span reads ISSGTYGRV. The active-site Proton acceptor is the aspartate 173. Disordered regions lie at residues 307 to 341 and 418 to 450; these read ASSH…NLEK and QDDN…RQKE. A compositionally biased stretch (basic residues) spans 310-326; the sequence is HHNHHSHHHPHHHHGHY.

Belongs to the protein kinase superfamily. CMGC Ser/Thr protein kinase family. CDC2/CDKX subfamily. As to quaternary structure, component of the SRB8-11 complex, a regulatory module of the Mediator complex. Interacts with SSN8/FCC1. The cofactor is Mg(2+).

Its subcellular location is the nucleus. It carries out the reaction L-seryl-[protein] + ATP = O-phospho-L-seryl-[protein] + ADP + H(+). The catalysed reaction is L-threonyl-[protein] + ATP = O-phospho-L-threonyl-[protein] + ADP + H(+). The enzyme catalyses [DNA-directed RNA polymerase] + ATP = phospho-[DNA-directed RNA polymerase] + ADP + H(+). Functionally, component of the SRB8-11 complex. The SRB8-11 complex is a regulatory module of the Mediator complex which is itself involved in regulation of basal and activated RNA polymerase II-dependent transcription. The SRB8-11 complex may be involved in the transcriptional repression of a subset of genes regulated by Mediator. It may inhibit the association of the Mediator complex with RNA polymerase II to form the holoenzyme complex. The SRB8-11 complex phosphorylates the C-terminal domain (CTD) of the largest subunit of RNA polymerase II. Required for normal growth and secondary metabolism. This Gibberella moniliformis (Maize ear and stalk rot fungus) protein is Serine/threonine-protein kinase SSN3 (SSN3).